The sequence spans 233 residues: 7-cyano-7-deazaguanine synthase (233 aa).

Residue 17-27 (LSGGLDSMVCA) coordinates ATP. Residues Cys196, Cys206, Cys209, and Cys212 each coordinate Zn(2+).

This sequence belongs to the QueC family. It depends on Zn(2+) as a cofactor.

The enzyme catalyses 7-carboxy-7-deazaguanine + NH4(+) + ATP = 7-cyano-7-deazaguanine + ADP + phosphate + H2O + H(+). Its pathway is purine metabolism; 7-cyano-7-deazaguanine biosynthesis. Functionally, catalyzes the ATP-dependent conversion of 7-carboxy-7-deazaguanine (CDG) to 7-cyano-7-deazaguanine (preQ(0)). This chain is 7-cyano-7-deazaguanine synthase, found in Novosphingobium aromaticivorans (strain ATCC 700278 / DSM 12444 / CCUG 56034 / CIP 105152 / NBRC 16084 / F199).